The chain runs to 68 residues: MDKLTKEELIFLVKELMNPTLDDEKVSEYLDLLEKNVPYPAPSDLIFWSNEDYTAEQVVKIALNYKDE.

This is an uncharacterized protein from Bacillus subtilis (strain 168).